Reading from the N-terminus, the 407-residue chain is MEITLGIAMFTVIVLALAVLILFAKSKLVNSGDITIEINDDPGKAINLPAGGKLLGALANKGIFVSSACGGGGSCGQCIVKVTEGGGDILPTELSHISKREAKEGYRLSCQVNVKNSMKIELPEEVFGVKKWECTVISNDNKATFIKELKLQIPEGEEVPFRAGGYIQIEAEPHTVHYKDFDIPKEYHEDWDKFDLWRYTSKVDEHIIRAYSMASYPEEKGIIMLNVRIATPPPRNPDVPPGQMSSYIWSLKEGDKVTISGPFGEFFAKETDNEMVFIGGGAGMAPMRSHIFDQLKRLKSKRKMSFWYGARSKREMFYVEDFDMLQAENDNFVWHVALSDPLPEDDWDGYTGFIHNVLYENYLKNHEAPEDCEYYMCGPPVMNAAVIKMLKDLGVEDENILLDDFGG.

Residues 3-23 form a helical membrane-spanning segment; that stretch reads ITLGIAMFTVIVLALAVLILF. The region spanning 32-126 is the 2Fe-2S ferredoxin-type domain; sequence GDITIEINDD…SMKIELPEEV (95 aa). [2Fe-2S] cluster is bound by residues cysteine 69, cysteine 75, cysteine 78, and cysteine 110. In terms of domain architecture, FAD-binding FR-type spans 129-269; that stretch reads VKKWECTVIS…SGPFGEFFAK (141 aa).

It belongs to the NqrF family. As to quaternary structure, composed of six subunits; NqrA, NqrB, NqrC, NqrD, NqrE and NqrF. The cofactor is [2Fe-2S] cluster. It depends on FAD as a cofactor.

It is found in the cell inner membrane. It carries out the reaction a ubiquinone + n Na(+)(in) + NADH + H(+) = a ubiquinol + n Na(+)(out) + NAD(+). In terms of biological role, NQR complex catalyzes the reduction of ubiquinone-1 to ubiquinol by two successive reactions, coupled with the transport of Na(+) ions from the cytoplasm to the periplasm. The first step is catalyzed by NqrF, which accepts electrons from NADH and reduces ubiquinone-1 to ubisemiquinone by a one-electron transfer pathway. The sequence is that of Na(+)-translocating NADH-quinone reductase subunit F from Histophilus somni (strain 129Pt) (Haemophilus somnus).